Consider the following 124-residue polypeptide: Small ribosomal subunit protein uS12 (124 aa).

D89 is subject to 3-methylthioaspartic acid. The tract at residues 104–124 (TQGVKNRGQARSRYGAKKEKK) is disordered. Positions 111-124 (GQARSRYGAKKEKK) are enriched in basic residues.

Belongs to the universal ribosomal protein uS12 family. In terms of assembly, part of the 30S ribosomal subunit. Contacts proteins S8 and S17. May interact with IF1 in the 30S initiation complex.

With S4 and S5 plays an important role in translational accuracy. Its function is as follows. Interacts with and stabilizes bases of the 16S rRNA that are involved in tRNA selection in the A site and with the mRNA backbone. Located at the interface of the 30S and 50S subunits, it traverses the body of the 30S subunit contacting proteins on the other side and probably holding the rRNA structure together. The combined cluster of proteins S8, S12 and S17 appears to hold together the shoulder and platform of the 30S subunit. This is Small ribosomal subunit protein uS12 from Micrococcus luteus (strain ATCC 4698 / DSM 20030 / JCM 1464 / CCM 169 / CCUG 5858 / IAM 1056 / NBRC 3333 / NCIMB 9278 / NCTC 2665 / VKM Ac-2230) (Micrococcus lysodeikticus).